We begin with the raw amino-acid sequence, 185 residues long: Potassium-transporting ATPase KdpC subunit (185 aa).

Residues 14-34 traverse the membrane as a helical segment; the sequence is ALSLLTGVAYPLALTGIAAVI. The interval 105-128 is disordered; the sequence is AQNGAPAPVDAVTASGSGLDPHVS.

The protein belongs to the KdpC family. The system is composed of three essential subunits: KdpA, KdpB and KdpC.

It is found in the cell inner membrane. In terms of biological role, part of the high-affinity ATP-driven potassium transport (or Kdp) system, which catalyzes the hydrolysis of ATP coupled with the electrogenic transport of potassium into the cytoplasm. This subunit acts as a catalytic chaperone that increases the ATP-binding affinity of the ATP-hydrolyzing subunit KdpB by the formation of a transient KdpB/KdpC/ATP ternary complex. This is Potassium-transporting ATPase KdpC subunit from Cereibacter sphaeroides (strain ATCC 17029 / ATH 2.4.9) (Rhodobacter sphaeroides).